We begin with the raw amino-acid sequence, 462 residues long: Ribosomal protein uS12 methylthiotransferase RimO (462 aa).

Residues 22–133 form the MTTase N-terminal domain; that stretch reads ASVAFLHLGC…IIEVLQRVRQ (112 aa). [4Fe-4S] cluster contacts are provided by cysteine 31, cysteine 67, cysteine 96, cysteine 171, cysteine 175, and cysteine 178. Positions 157–386 constitute a Radical SAM core domain; the sequence is TTGRFVSYLK…VAIQQPISAA (230 aa). The TRAM domain occupies 389 to 460; that stretch reads QALIGQTVDV…LYDLTGEINH (72 aa).

It belongs to the methylthiotransferase family. RimO subfamily. [4Fe-4S] cluster is required as a cofactor.

It localises to the cytoplasm. The catalysed reaction is L-aspartate(89)-[ribosomal protein uS12]-hydrogen + (sulfur carrier)-SH + AH2 + 2 S-adenosyl-L-methionine = 3-methylsulfanyl-L-aspartate(89)-[ribosomal protein uS12]-hydrogen + (sulfur carrier)-H + 5'-deoxyadenosine + L-methionine + A + S-adenosyl-L-homocysteine + 2 H(+). Catalyzes the methylthiolation of an aspartic acid residue of ribosomal protein uS12. The polypeptide is Ribosomal protein uS12 methylthiotransferase RimO (Prochlorococcus marinus (strain MIT 9211)).